Consider the following 1134-residue polypeptide: DNA polymerase II large subunit (1134 aa).

It belongs to the archaeal DNA polymerase II family. Heterodimer of a large subunit and a small subunit.

It carries out the reaction DNA(n) + a 2'-deoxyribonucleoside 5'-triphosphate = DNA(n+1) + diphosphate. The catalysed reaction is Exonucleolytic cleavage in the 3'- to 5'-direction to yield nucleoside 5'-phosphates.. In terms of biological role, possesses two activities: a DNA synthesis (polymerase) and an exonucleolytic activity that degrades single-stranded DNA in the 3'- to 5'-direction. Has a template-primer preference which is characteristic of a replicative DNA polymerase. The protein is DNA polymerase II large subunit of Methanocella arvoryzae (strain DSM 22066 / NBRC 105507 / MRE50).